We begin with the raw amino-acid sequence, 288 residues long: Bifunctional protein FolD 2 (288 aa).

Residues 166 to 168 (GRS) and S191 each bind NADP(+).

It belongs to the tetrahydrofolate dehydrogenase/cyclohydrolase family. In terms of assembly, homodimer.

The catalysed reaction is (6R)-5,10-methylene-5,6,7,8-tetrahydrofolate + NADP(+) = (6R)-5,10-methenyltetrahydrofolate + NADPH. It carries out the reaction (6R)-5,10-methenyltetrahydrofolate + H2O = (6R)-10-formyltetrahydrofolate + H(+). Its pathway is one-carbon metabolism; tetrahydrofolate interconversion. Its function is as follows. Catalyzes the oxidation of 5,10-methylenetetrahydrofolate to 5,10-methenyltetrahydrofolate and then the hydrolysis of 5,10-methenyltetrahydrofolate to 10-formyltetrahydrofolate. The sequence is that of Bifunctional protein FolD 2 from Frankia casuarinae (strain DSM 45818 / CECT 9043 / HFP020203 / CcI3).